Reading from the N-terminus, the 228-residue chain is Rab-like protein 2A (228 aa).

Residues 28–35 (GDSAVGKS), 76–80 (DTAGQ), and 133–136 (NKID) each bind GTP. The interval 200 to 228 (LEQEEEDVPDQEQSSSIETPSEEVASPHS) is disordered.

Belongs to the small GTPase superfamily. Rab family. In terms of assembly, interacts with IFT27, IFT81, IFT172, ATP6V1E1, HK1, LDHC, MAPRE1 and HSPA2. In terms of tissue distribution, expressed in the testis.

Functionally, plays an essential role in male fertility, sperm intra-flagellar transport, and tail assembly. Binds, in a GTP-regulated manner, to a specific set of effector proteins including key proteins involved in cilia development and function and delivers them into the growing sperm tail. This is Rab-like protein 2A (RABL2A) from Homo sapiens (Human).